Here is a 486-residue protein sequence, read N- to C-terminus: Glutamyl-tRNA(Gln) amidotransferase subunit A (486 aa).

Catalysis depends on charge relay system residues Lys80 and Ser155. The active-site Acyl-ester intermediate is Ser179.

Belongs to the amidase family. GatA subfamily. Heterotrimer of A, B and C subunits.

It catalyses the reaction L-glutamyl-tRNA(Gln) + L-glutamine + ATP + H2O = L-glutaminyl-tRNA(Gln) + L-glutamate + ADP + phosphate + H(+). In terms of biological role, allows the formation of correctly charged Gln-tRNA(Gln) through the transamidation of misacylated Glu-tRNA(Gln) in organisms which lack glutaminyl-tRNA synthetase. The reaction takes place in the presence of glutamine and ATP through an activated gamma-phospho-Glu-tRNA(Gln). The protein is Glutamyl-tRNA(Gln) amidotransferase subunit A of Geobacillus sp. (strain WCH70).